Reading from the N-terminus, the 104-residue chain is Type VII secretion system extracellular protein B (104 aa).

It belongs to the WXG100 family. As to quaternary structure, homodimer. When mixed with EsxA does not form heterodimers.

The protein localises to the secreted. Virulence factor that is important for the establishment of infection in the host. EsxB is required for EsxA synthesis as well as secretion. Mediates together with EsxA the release of S.aureus from the host cell. Also inhibits host cytokine production and thus modulates dendritic cell-mediated immunity. The polypeptide is Type VII secretion system extracellular protein B (Staphylococcus aureus (strain Mu50 / ATCC 700699)).